The following is a 468-amino-acid chain: Mothers against decapentaplegic homolog 2 (468 aa).

The MH1 domain maps to 10-177 (PVVKRLLGWK…YQRVETPVLP (168 aa)). Zn(2+) is bound by residues cysteine 75, cysteine 150, cysteine 162, and histidine 167. The tract at residues 224 to 254 (PGYISEDGEASDQQMNQSMDTGSPAELSPST) is disordered. Polar residues predominate over residues 234–244 (SDQQMNQSMDT). In terms of domain architecture, MH2 spans 275–468 (WCSIAYYELN…SPSVRCSSMS (194 aa)).

It belongs to the dwarfin/SMAD family.

Its subcellular location is the cytoplasm. The protein resides in the nucleus. Functionally, promotes differentiation of dorsal tissues. May be involved in the mediation of Ndr2 signaling during mesoderm and axis formation during embryogenesis. In Danio rerio (Zebrafish), this protein is Mothers against decapentaplegic homolog 2 (smad2).